A 697-amino-acid polypeptide reads, in one-letter code: Long-chain-fatty-acid--CoA ligase 6 (697 aa).

Residues leucine 25–threonine 45 form a helical; Signal-anchor for type III membrane protein membrane-spanning segment. Topologically, residues histidine 46 to methionine 697 are cytoplasmic.

The protein belongs to the ATP-dependent AMP-binding enzyme family. Mg(2+) is required as a cofactor. Expressed predominantly in erythrocyte precursors, in particular in reticulocytes, fetal blood cells derived from fetal liver, hemopoietic stem cells from cord blood, bone marrow and brain.

It is found in the mitochondrion outer membrane. The protein localises to the peroxisome membrane. Its subcellular location is the microsome membrane. It localises to the endoplasmic reticulum membrane. The enzyme catalyses a long-chain fatty acid + ATP + CoA = a long-chain fatty acyl-CoA + AMP + diphosphate. It carries out the reaction (5Z,8Z,11Z,14Z)-eicosatetraenoate + ATP + CoA = (5Z,8Z,11Z,14Z)-eicosatetraenoyl-CoA + AMP + diphosphate. The catalysed reaction is hexadecanoate + ATP + CoA = hexadecanoyl-CoA + AMP + diphosphate. It catalyses the reaction (E)-hexadec-2-enoate + ATP + CoA = (2E)-hexadecenoyl-CoA + AMP + diphosphate. The enzyme catalyses 15-hydroxy-(5Z,8Z,11Z,13E)-eicosatetraenoate + ATP + CoA = 15-hydroxy-(5Z,8Z,11Z,13E)-eicosatetraenoyl-CoA + AMP + diphosphate. It carries out the reaction 12-hydroxy-(5Z,8Z,10E,14Z)-eicosatetraenoate + ATP + CoA = 12-hydroxy-(5Z,8Z,10E,14Z)-eicosatetraenoyl-CoA + AMP + diphosphate. The catalysed reaction is 5-hydroxy-(6E,8Z,11Z,14Z)-eicosatetraenoate + ATP + CoA = 5-hydroxy-(6E,8Z,11Z,14Z)-eicosatetraenoyl-CoA + AMP + diphosphate. Its function is as follows. Catalyzes the conversion of long-chain fatty acids to their active form acyl-CoA for both synthesis of cellular lipids, and degradation via beta-oxidation. Plays an important role in fatty acid metabolism in brain and the acyl-CoAs produced may be utilized exclusively for the synthesis of the brain lipid. This Homo sapiens (Human) protein is Long-chain-fatty-acid--CoA ligase 6.